The chain runs to 637 residues: 1-deoxy-D-xylulose-5-phosphate synthase (637 aa).

Residues H71 and 112–114 (SHA) contribute to the thiamine diphosphate site. D144 lines the Mg(2+) pocket. Thiamine diphosphate contacts are provided by residues 145–146 (GA), N173, Y284, and E365. N173 lines the Mg(2+) pocket.

It belongs to the transketolase family. DXPS subfamily. In terms of assembly, homodimer. Mg(2+) serves as cofactor. Thiamine diphosphate is required as a cofactor.

It carries out the reaction D-glyceraldehyde 3-phosphate + pyruvate + H(+) = 1-deoxy-D-xylulose 5-phosphate + CO2. The protein operates within metabolic intermediate biosynthesis; 1-deoxy-D-xylulose 5-phosphate biosynthesis; 1-deoxy-D-xylulose 5-phosphate from D-glyceraldehyde 3-phosphate and pyruvate: step 1/1. Its function is as follows. Catalyzes the acyloin condensation reaction between C atoms 2 and 3 of pyruvate and glyceraldehyde 3-phosphate to yield 1-deoxy-D-xylulose-5-phosphate (DXP). The polypeptide is 1-deoxy-D-xylulose-5-phosphate synthase (Mycobacterium ulcerans (strain Agy99)).